Here is a 202-residue protein sequence, read N- to C-terminus: Putative zinc finger protein ZK686.5 (202 aa).

The tract at residues Arg-43–Lys-63 is disordered. 3 C2H2-type zinc fingers span residues Thr-110–His-133, Ile-138–His-160, and Val-169–His-192.

It is found in the nucleus. This Caenorhabditis elegans protein is Putative zinc finger protein ZK686.5.